Reading from the N-terminus, the 683-residue chain is Phosphomethylpyrimidine synthase (683 aa).

Substrate is bound by residues N235, M264, Y293, H329, 349–351, 390–393, and E429; these read SRG and DGMR. H433 serves as a coordination point for Zn(2+). Y456 contributes to the substrate binding site. H497 serves as a coordination point for Zn(2+). [4Fe-4S] cluster contacts are provided by C577, C580, and C585. Residues 647-683 are disordered; the sequence is RQSPGVESTSLESTSLESTVLESTSLESTALEKAKEV. Positions 653-675 are enriched in low complexity; it reads ESTSLESTSLESTVLESTSLEST.

This sequence belongs to the ThiC family. As to quaternary structure, homodimer. [4Fe-4S] cluster is required as a cofactor.

The catalysed reaction is 5-amino-1-(5-phospho-beta-D-ribosyl)imidazole + S-adenosyl-L-methionine = 4-amino-2-methyl-5-(phosphooxymethyl)pyrimidine + CO + 5'-deoxyadenosine + formate + L-methionine + 3 H(+). Its pathway is cofactor biosynthesis; thiamine diphosphate biosynthesis. Catalyzes the synthesis of the hydroxymethylpyrimidine phosphate (HMP-P) moiety of thiamine from aminoimidazole ribotide (AIR) in a radical S-adenosyl-L-methionine (SAM)-dependent reaction. This Shewanella loihica (strain ATCC BAA-1088 / PV-4) protein is Phosphomethylpyrimidine synthase.